Consider the following 155-residue polypeptide: Ribonuclease H (155 aa).

Residues 4-145 enclose the RNase H type-1 domain; the sequence is QQKVVEIYTD…ADALARKAIA (142 aa). Mg(2+) is bound by residues Asp13, Glu51, Asp73, and Asp137.

This sequence belongs to the RNase H family. Monomer. Requires Mg(2+) as cofactor.

The protein resides in the cytoplasm. It catalyses the reaction Endonucleolytic cleavage to 5'-phosphomonoester.. Its function is as follows. Endonuclease that specifically degrades the RNA of RNA-DNA hybrids. The protein is Ribonuclease H of Bartonella tribocorum (strain CIP 105476 / IBS 506).